We begin with the raw amino-acid sequence, 190 residues long: DNA-binding transcriptional repressor TetR (190 aa).

Residues 6 to 66 (ETRSAALLAV…AALDAHDASF (61 aa)) enclose the HTH tetR-type domain. Positions 29–48 (SMDSVAALAHASKTTIYRRW) form a DNA-binding region, H-T-H motif.

As to quaternary structure, homodimer.

Its function is as follows. Binds to its own palindromic promoter and represses transcription of its operon; addition of tetracycline or doxycycline (but not tigecycline) interferes with DNA binding. Addition of TetX to the DNA-TetR-antibiotic complex restores DNA binding. This Mycobacteroides abscessus (strain ATCC 19977 / DSM 44196 / CCUG 20993 / CIP 104536 / JCM 13569 / NCTC 13031 / TMC 1543 / L948) (Mycobacterium abscessus) protein is DNA-binding transcriptional repressor TetR.